Consider the following 1693-residue polypeptide: MLPTILSISYEHISLDLSKYQTAYACEGKKLTIECDPGDVINLIRANYGRFSITICNDHGNVEWSVNCMFPKSLSVLNSRCAHKQSCGVLAATSMFGDPCPGTHKYLEAHYQCISAAQTSTTTNRPSPPPWVLSNGPPIFGNGSGLIHPPGVGAGAPPPPRLPTLPGVVGISGNPGLFNVPPQHTAVTHSTPWSSTTAVGGGRLKGGATSTTTTKHPAGRHDGLPPPPQLHHHHNHHGEDTASPTKPSSKLPAGGNVTSPSNTRILTGVGGSGTDDGTLLTTKSSPNRPPGTAASGSVAGNSSVVRTINNINLNAAGMSGGDDESKLFCGPTHARNLYWNMTRVGDVNVQPCPGGAAGIAKWRCVLMKRMPDSGYDEYDDDASSTTPAPSGGDCLHNSSSCEPPVSMAHKVNQRLRNFEPTWHPATPDLTQCRSLWLNNLEMRVNQRDSSLISIANDMSEVTSSKTLYGGDMLVTTKIIQTVSEKMMHDKETFPDQRQREAMIMELLHCVVKTGSNLLDESQLSSWLDLNPEDQMRVATSLLTGLEYNAFLLADTISGSAVWCKKSKIYSSVVFPDTDQWPLSSDRIELPRAALIDNSEGGLVRIVFAAFDRLESILKPSYDHFDLKSSRSYVRNTAILSNDSDVNAGEIQQRLRILNSKVISASLGKGRHIQLSQPITLTLKHLKTENVTNPTCVFWNYIDHAWSANGCSLESTNRTHSVCSCNHLTNFAILMDVVDEHQHSLFTMFDGNMRIFIYISIGICVVFIVIALLTLKLFNGVFVKSARTSIYTSIYLCLLAIELLFLLGIEQTETSIFCGFITIFLHCAILSGTAWFCYEAFHSYSTLTSDELLLEVDQTPKVNCYYLLSYGLSLSVVAISLVIDPSTYTQNDYCVLMEANALFYATFVVPVLVFFVAAIGYTFLSWIIMCRKSRTGLKTKEHTRLASVRFDIRCSFVFLLLLSAVWCSAYFYLRGAKMDDDTADVYGYCFICFNTLLGLYIFVFHCIQNEKIRREYRKYVRQHAWLPKCLRCSKTSISSGIVTGNGPTAGTLCSVSTSKKPKLPLGVSEEAHDDPQQQQQTPVPITEDAIMGATSDCELNEAQQRRTLKSGLMTGTLQAPTQTLGGHVVLERGSTLRSTGHASPTSSAGSTHLIFAHKQQQQQQQQGPLGESYYHQPDYYSWKQPSTGTGGLKTPREYYNNAGAAASSPQQAHEVFYWTQKPNSGQHGKKKRGAGGVPASPSGSLHSRTAAASQVLFYPSYKKTKPGQPTGYPQYAEALDPPLATGNAAAYYQQQQQLRRQQLHQQQQQLSSDEEQAEQHAHLLHLQRRAGSQQQLPAPPPHMAQYQQEFMQRQYRNKHSNCDLGMGDAYYNQGSVGGADGGPVYEEILSNRNSDVQHYEVGDFDVDEVYNNSVGTGVFNNMRAAVAAGGSRYGGGSLSGGSVSSRSQQQQLKKQQQQQSLAQQRSVRRCTADDDDDEDEEEDEEATAAEQLHDSVCDEDEEEDESDLEHDAHGLPPQSDERMRRLMAMQDEDFKRRFQRQLRKHGAPLDYGALPPGAGPQPEHNGAVFGVSGGVGEGSMRGAFRQQQQQQALNAKSPGGRLAVNELFGHGNSGPPLPPANQTPAQKRQQLQKLSPQSTTSSSSHTSHSNPNLHPHQLTHPHPHQHPPHHQQRHLSAMLDENNTVRCYLEPLAK.

Residues 1–753 (MLPTILSISY…LFTMFDGNMR (753 aa)) are Extracellular-facing. One can recognise an SUEL-type lectin domain in the interval 25–114 (ACEGKKLTIE…KYLEAHYQCI (90 aa)). A glycan (N-linked (GlcNAc...) asparagine) is linked at Asn142. Polar residues-rich tracts occupy residues 185-198 (TAVT…STTA) and 256-265 (NVTSPSNTRI). The interval 185-299 (TAVTHSTPWS…PGTAASGSVA (115 aa)) is disordered. Asn256 carries N-linked (GlcNAc...) asparagine glycosylation. Positions 275–299 (DDGTLLTTKSSPNRPPGTAASGSVA) are enriched in low complexity. N-linked (GlcNAc...) asparagine glycosylation is found at Asn301, Asn340, Asn397, Asn641, Asn689, and Asn716. The segment at 375–399 (YDEYDDDASSTTPAPSGGDCLHNSS) is disordered. The 177-residue stretch at 564–740 (KKSKIYSSVV…AILMDVVDEH (177 aa)) folds into the GAIN-B domain. 2 disulfides stabilise this stretch: Cys695–Cys722 and Cys710–Cys724. Residues 695 to 740 (CVFWNYIDHAWSANGCSLESTNRTHSVCSCNHLTNFAILMDVVDEH) form a GPS region. The chain crosses the membrane as a helical span at residues 754 to 774 (IFIYISIGICVVFIVIALLTL). Residues 775–787 (KLFNGVFVKSART) are Cytoplasmic-facing. A helical membrane pass occupies residues 788–808 (SIYTSIYLCLLAIELLFLLGI). The Extracellular segment spans residues 809 to 814 (EQTETS). Residues 815-835 (IFCGFITIFLHCAILSGTAWF) traverse the membrane as a helical segment. Residues 836 to 861 (CYEAFHSYSTLTSDELLLEVDQTPKV) lie on the Cytoplasmic side of the membrane. A helical transmembrane segment spans residues 862 to 882 (NCYYLLSYGLSLSVVAISLVI). Over 883–906 (DPSTYTQNDYCVLMEANALFYATF) the chain is Extracellular. A helical membrane pass occupies residues 907–927 (VVPVLVFFVAAIGYTFLSWII). Over 928–954 (MCRKSRTGLKTKEHTRLASVRFDIRCS) the chain is Cytoplasmic. Residues 955–975 (FVFLLLLSAVWCSAYFYLRGA) traverse the membrane as a helical segment. The Extracellular portion of the chain corresponds to 976–985 (KMDDDTADVY). The helical transmembrane segment at 986–1006 (GYCFICFNTLLGLYIFVFHCI) threads the bilayer. At 1007–1693 (QNEKIRREYR…VRCYLEPLAK (687 aa)) the chain is on the cytoplasmic side. Position 1142 is a phosphoserine (Ser1142). 5 disordered regions span residues 1156–1194 (HKQQ…LKTP), 1220–1247 (KPNS…LHSR), 1294–1319 (QQQL…AEQH), 1433–1521 (GGGS…SDER), and 1601–1673 (LAVN…QQRH). Phosphoserine occurs at positions 1239 and 1246. The segment covering 1294–1309 (QQQLRRQQLHQQQQQL) has biased composition (low complexity). Phosphoserine occurs at positions 1310 and 1311. Low complexity predominate over residues 1439–1464 (GGSVSSRSQQQQLKKQQQQQSLAQQR). Composition is skewed to acidic residues over residues 1472 to 1486 (DDDD…EEAT) and 1496 to 1507 (CDEDEEEDESDL). Positions 1508 to 1521 (EHDAHGLPPQSDER) are enriched in basic and acidic residues. The span at 1630–1655 (LQKLSPQSTTSSSSHTSHSNPNLHPH) shows a compositional bias: low complexity. A compositionally biased stretch (basic residues) spans 1656 to 1672 (QLTHPHPHQHPPHHQQR).

The protein belongs to the G-protein coupled receptor 2 family. LN-TM7 subfamily. In terms of assembly, forms a heterodimer, consisting of a large extracellular region non-covalently linked to a seven-transmembrane moiety. In terms of processing, proteolytically cleaved into 2 subunits, an extracellular subunit and a seven-transmembrane subunit.

The protein localises to the cell membrane. This chain is Latrophilin Cirl, found in Drosophila sechellia (Fruit fly).